A 227-amino-acid polypeptide reads, in one-letter code: Cytidylate kinase (227 aa).

Residue 12-20 (GPSGAGKGT) coordinates ATP.

Belongs to the cytidylate kinase family. Type 1 subfamily.

It is found in the cytoplasm. The catalysed reaction is CMP + ATP = CDP + ADP. It catalyses the reaction dCMP + ATP = dCDP + ADP. This Photorhabdus laumondii subsp. laumondii (strain DSM 15139 / CIP 105565 / TT01) (Photorhabdus luminescens subsp. laumondii) protein is Cytidylate kinase.